The following is a 283-amino-acid chain: Shikimate kinase (283 aa).

86–96 (PIKSGLSSSSA) serves as a coordination point for ATP.

It belongs to the GHMP kinase family. Archaeal shikimate kinase subfamily.

It is found in the cytoplasm. The catalysed reaction is shikimate + ATP = 3-phosphoshikimate + ADP + H(+). Its pathway is metabolic intermediate biosynthesis; chorismate biosynthesis; chorismate from D-erythrose 4-phosphate and phosphoenolpyruvate: step 5/7. The chain is Shikimate kinase from Methanococcus maripaludis (strain C6 / ATCC BAA-1332).